Consider the following 471-residue polypeptide: Tryptophanase (471 aa).

Lys5, Lys115, and Lys156 each carry N6-acetyllysine. N6-(pyridoxal phosphate)lysine is present on Lys270. The residue at position 450 (Lys450) is an N6-acetyllysine.

This sequence belongs to the beta-eliminating lyase family. As to quaternary structure, homotetramer. The cofactor is pyridoxal 5'-phosphate.

The enzyme catalyses L-tryptophan + H2O = indole + pyruvate + NH4(+). It participates in amino-acid degradation; L-tryptophan degradation via pyruvate pathway; indole and pyruvate from L-tryptophan: step 1/1. The chain is Tryptophanase from Escherichia fergusonii (strain ATCC 35469 / DSM 13698 / CCUG 18766 / IAM 14443 / JCM 21226 / LMG 7866 / NBRC 102419 / NCTC 12128 / CDC 0568-73).